We begin with the raw amino-acid sequence, 211 residues long: Thiamine-phosphate synthase (211 aa).

4-amino-2-methyl-5-(diphosphooxymethyl)pyrimidine-binding positions include Gln-37 to Lys-41 and Asn-69. Asp-70 and Asp-89 together coordinate Mg(2+). Ser-108 lines the 4-amino-2-methyl-5-(diphosphooxymethyl)pyrimidine pocket. Residue Thr-134 to Thr-136 participates in 2-[(2R,5Z)-2-carboxy-4-methylthiazol-5(2H)-ylidene]ethyl phosphate binding. Position 137 (Lys-137) interacts with 4-amino-2-methyl-5-(diphosphooxymethyl)pyrimidine. 2-[(2R,5Z)-2-carboxy-4-methylthiazol-5(2H)-ylidene]ethyl phosphate is bound by residues Gly-166 and Val-186 to Ser-187.

It belongs to the thiamine-phosphate synthase family. Mg(2+) is required as a cofactor.

The catalysed reaction is 2-[(2R,5Z)-2-carboxy-4-methylthiazol-5(2H)-ylidene]ethyl phosphate + 4-amino-2-methyl-5-(diphosphooxymethyl)pyrimidine + 2 H(+) = thiamine phosphate + CO2 + diphosphate. The enzyme catalyses 2-(2-carboxy-4-methylthiazol-5-yl)ethyl phosphate + 4-amino-2-methyl-5-(diphosphooxymethyl)pyrimidine + 2 H(+) = thiamine phosphate + CO2 + diphosphate. It carries out the reaction 4-methyl-5-(2-phosphooxyethyl)-thiazole + 4-amino-2-methyl-5-(diphosphooxymethyl)pyrimidine + H(+) = thiamine phosphate + diphosphate. It participates in cofactor biosynthesis; thiamine diphosphate biosynthesis; thiamine phosphate from 4-amino-2-methyl-5-diphosphomethylpyrimidine and 4-methyl-5-(2-phosphoethyl)-thiazole: step 1/1. Functionally, condenses 4-methyl-5-(beta-hydroxyethyl)thiazole monophosphate (THZ-P) and 2-methyl-4-amino-5-hydroxymethyl pyrimidine pyrophosphate (HMP-PP) to form thiamine monophosphate (TMP). This is Thiamine-phosphate synthase from Escherichia coli O1:K1 / APEC.